The following is a 497-amino-acid chain: Nucleoside transporter 1 (497 aa).

Residues Met1 to Glu26 lie on the Cytoplasmic side of the membrane. A helical membrane pass occupies residues Phe27–Val47. Residues Phe48–Asn77 lie on the Extracellular side of the membrane. The helical transmembrane segment at Val78–Leu98 threads the bilayer. Residues Leu99–Met107 are Cytoplasmic-facing. A helical transmembrane segment spans residues Leu108–Val128. Residues Pro129–Glu135 lie on the Extracellular side of the membrane. A helical membrane pass occupies residues Ala136–Phe156. At Glu157 to Thr172 the chain is on the cytoplasmic side. A helical membrane pass occupies residues Ser173–Val193. Residues Lys194–Ser208 are Extracellular-facing. Residues Tyr209–Met229 traverse the membrane as a helical segment. Residues Arg230 to Lys337 lie on the Cytoplasmic side of the membrane. Positions Asn286–Glu299 are enriched in basic and acidic residues. A disordered region spans residues Asn286 to Glu316. The chain crosses the membrane as a helical span at residues Trp338 to Ala358. Topologically, residues Thr359–Met361 are extracellular. The chain crosses the membrane as a helical span at residues Phe362–Leu382. At Gly383–Arg400 the chain is on the cytoplasmic side. A helical transmembrane segment spans residues Trp401 to Ser421. Over Tyr422–Tyr432 the chain is Extracellular. The chain crosses the membrane as a helical span at residues Val433–Gly453. Residues Pro454–Arg465 are Cytoplasmic-facing. A helical transmembrane segment spans residues Phe466–Leu486. Topologically, residues Ser487–Tyr497 are extracellular.

Belongs to the SLC29A/ENT transporter (TC 2.A.57) family.

It is found in the cell membrane. The enzyme catalyses adenosine(in) = adenosine(out). It carries out the reaction hypoxanthine(out) = hypoxanthine(in). The catalysed reaction is inosine(in) = inosine(out). It catalyses the reaction uridine(out) = uridine(in). The enzyme catalyses cytidine(in) = cytidine(out). Nucleoside transporter with broad substrate specificity. Transports adenosine with high affinity. Can also transport hypoxanthine, inosine, uridine and cytidine. In Crithidia fasciculata, this protein is Nucleoside transporter 1.